A 382-amino-acid polypeptide reads, in one-letter code: Cell division protein FtsZ (382 aa).

GTP is bound by residues Gly-21 to Asn-25, Gly-108 to Gly-110, Glu-139, Arg-143, and Asp-187. Residues Lys-320–Gly-382 are disordered. Over residues Gln-326–Val-341 the composition is skewed to polar residues. Residues Pro-342 to Pro-351 show a composition bias toward basic and acidic residues. Residues Gln-352 to Ala-365 are compositionally biased toward polar residues.

This sequence belongs to the FtsZ family. In terms of assembly, homodimer. Polymerizes to form a dynamic ring structure in a strictly GTP-dependent manner. Interacts directly with several other division proteins. Interacts with FtsA. Interacts with Phi29 DNA replication protein 1. Interacts with the cell division inhibitor MciZ.

Its subcellular location is the cytoplasm. Its activity is regulated as follows. During sporulation, is negatively regulated by MciZ, which binds to FtsZ and inhibits its polymerization and the formation of the Z ring. In terms of biological role, essential cell division protein that forms a contractile ring structure (Z ring) at the future cell division site. The regulation of the ring assembly controls the timing and the location of cell division. One of the functions of the FtsZ ring is to recruit other cell division proteins to the septum to produce a new cell wall between the dividing cells. Binds GTP and shows GTPase activity. The protein is Cell division protein FtsZ of Bacillus subtilis (strain 168).